Consider the following 165-residue polypeptide: MLSENVVKLLNDQMNLEFYSSNLYLQMSAWCDQQGFEGTAKFLSVHAAEEMQHMRKLFTYLNETGSLAVISAIEAPAHEYKSLKEVIETTYEHEKLITSKINELVGKTFEEKDYSAFNFLQWYVEEQHEEEKLFSSILDKLNFLGEDGKGLFLIDKDLGNLSTKA.

The Ferritin-like diiron domain maps to 1-145; sequence MLSENVVKLL…SILDKLNFLG (145 aa). Residues Glu17, Glu50, His53, Glu94, and Gln127 each contribute to the Fe cation site.

Belongs to the ferritin family. Prokaryotic subfamily.

Its subcellular location is the cytoplasm. This chain is Probable bacterial non-heme ferritin-like protein (ftnB), found in Haemophilus influenzae (strain ATCC 51907 / DSM 11121 / KW20 / Rd).